Here is a 395-residue protein sequence, read N- to C-terminus: Flap endonuclease 1 (395 aa).

The interval 1–108 is N-domain; sequence MGILGLSKLL…DELEMRRQKA (108 aa). Aspartate 34 is a binding site for Mg(2+). Arginine 74 is a DNA binding site. Mg(2+)-binding residues include aspartate 90, glutamate 162, glutamate 164, aspartate 183, and aspartate 185. The interval 126–257 is I-domain; sequence MMEKMSKRTV…QKAWEGIQRY (132 aa). Glutamate 162 provides a ligand contact to DNA. Positions 235 and 237 each coordinate DNA. A Mg(2+)-binding site is contributed by aspartate 237. The interval 340 to 348 is interaction with PCNA; that stretch reads TQGRLDSFF.

The protein belongs to the XPG/RAD2 endonuclease family. FEN1 subfamily. As to quaternary structure, interacts with PCNA. Three molecules of FEN1 bind to one PCNA trimer with each molecule binding to one PCNA monomer. PCNA stimulates the nuclease activity without altering cleavage specificity. Requires Mg(2+) as cofactor. Phosphorylated. Phosphorylation upon DNA damage induces relocalization to the nuclear plasma.

It localises to the nucleus. The protein localises to the nucleolus. It is found in the nucleoplasm. The protein resides in the mitochondrion. In terms of biological role, structure-specific nuclease with 5'-flap endonuclease and 5'-3' exonuclease activities involved in DNA replication and repair. During DNA replication, cleaves the 5'-overhanging flap structure that is generated by displacement synthesis when DNA polymerase encounters the 5'-end of a downstream Okazaki fragment. It enters the flap from the 5'-end and then tracks to cleave the flap base, leaving a nick for ligation. Also involved in the long patch base excision repair (LP-BER) pathway, by cleaving within the apurinic/apyrimidinic (AP) site-terminated flap. Acts as a genome stabilization factor that prevents flaps from equilibrating into structures that lead to duplications and deletions. Also possesses 5'-3' exonuclease activity on nicked or gapped double-stranded DNA, and exhibits RNase H activity. Also involved in replication and repair of rDNA and in repairing mitochondrial DNA. This Leishmania infantum protein is Flap endonuclease 1.